The primary structure comprises 204 residues: Large ribosomal subunit protein uL4 (204 aa).

A disordered region spans residues 49 to 76 (KTKGISDVSGTTAKPYGQKRTGRARQGS).

This sequence belongs to the universal ribosomal protein uL4 family. In terms of assembly, part of the 50S ribosomal subunit.

Functionally, one of the primary rRNA binding proteins, this protein initially binds near the 5'-end of the 23S rRNA. It is important during the early stages of 50S assembly. It makes multiple contacts with different domains of the 23S rRNA in the assembled 50S subunit and ribosome. Its function is as follows. Forms part of the polypeptide exit tunnel. In Wolbachia pipientis wMel, this protein is Large ribosomal subunit protein uL4.